The sequence spans 317 residues: Chitin synthase export chaperone (317 aa).

The next 7 helical transmembrane spans lie at 63–83 (IFEI…IIII), 101–121 (FFQT…GVSA), 133–153 (VQLG…LLGF), 164–184 (MLLL…VSIV), 204–224 (FTVM…CLLI), 236–256 (TGAI…IYAF), and 266–286 (HYLD…MMLY).

The protein belongs to the CHS7 family. In terms of assembly, interacts with CHS3.

It is found in the endoplasmic reticulum membrane. Functionally, chaperone required for the export of the chitin synthase CHS3 from the endoplasmic reticulum. The sequence is that of Chitin synthase export chaperone (CHS7) from Kluyveromyces lactis (strain ATCC 8585 / CBS 2359 / DSM 70799 / NBRC 1267 / NRRL Y-1140 / WM37) (Yeast).